A 201-amino-acid chain; its full sequence is MHEWGLSEELKIQTKQMIEIAEKELSIMRNAIDKEDECILCKMEDIHHMLANVQTLAATYYIQAYLSPYTESSSFITTAIQHLSARKHGALIVVERNETLEALIQTGTTLNAHLTAPLLESIFYPGNPLHDGAVLVKNNHIVSAANILPLTKSTEVDPELGTRHRAAIGLSEKSDALILVVSEETGRTSFALNGILYTISL.

The DAC domain maps to 54 to 201 (QTLAATYYIQ…LNGILYTISL (148 aa)).

It belongs to the adenylate cyclase family. DacB/CdaS subfamily. In terms of assembly, probably forms a homohexamer. It depends on Mg(2+) as a cofactor.

The catalysed reaction is 2 ATP = 3',3'-c-di-AMP + 2 diphosphate. Functionally, one of 3 paralogous diadenylate cyclases (DAC) in this bacteria catalyzing the condensation of 2 ATP molecules into cyclic di-AMP (c-di-AMP). It has slow DAC activity with ADP as a substrate and may have weak ADPase activity. Required for efficient spore formation, whereas in B.subtilis, it is required for efficient spore germination. It is produced under the control of different sigma factors in the two bacteria. It is also required for parasporal crystal formation. The sequence is that of Diadenylate cyclase CdaS from Bacillus thuringiensis (strain BMB171).